The following is a 183-amino-acid chain: Adenylate kinase (183 aa).

Residue 12 to 17 participates in ATP binding; it reads GAGKGT. The NMP stretch occupies residues 32–61; the sequence is STGDLLRSEVAAGTALGQEAEAVMNRGELV. Residues Thr33, Arg38, 59–61, 86–89, and Gln93 each bind AMP; these read ELV and GFPR. Residues 127-133 are LID; the sequence is ARGRDDD. Position 128 (Arg128) interacts with ATP. The AMP site is built by Arg130 and Arg141. Residue Gly169 participates in ATP binding.

The protein belongs to the adenylate kinase family. As to quaternary structure, monomer.

It localises to the cytoplasm. The catalysed reaction is AMP + ATP = 2 ADP. Its pathway is purine metabolism; AMP biosynthesis via salvage pathway; AMP from ADP: step 1/1. Functionally, catalyzes the reversible transfer of the terminal phosphate group between ATP and AMP. Plays an important role in cellular energy homeostasis and in adenine nucleotide metabolism. The chain is Adenylate kinase from Parasynechococcus marenigrum (strain WH8102).